We begin with the raw amino-acid sequence, 102 residues long: Large ribosomal subunit protein bL21 (102 aa).

Belongs to the bacterial ribosomal protein bL21 family. As to quaternary structure, part of the 50S ribosomal subunit. Contacts protein L20.

Its function is as follows. This protein binds to 23S rRNA in the presence of protein L20. The protein is Large ribosomal subunit protein bL21 of Zymomonas mobilis subsp. mobilis (strain ATCC 31821 / ZM4 / CP4).